The chain runs to 202 residues: Casparian strip membrane protein 1 (202 aa).

Topologically, residues 1-42 (MEKNKSTAIEIAESSKESKGKAPLLAAAVGHDRAAGYKRGVS) are cytoplasmic. Residues 43-63 (IFDLFLRISAATAALAATIVM) form a helical membrane-spanning segment. The Extracellular segment spans residues 64–90 (GTTEQTLPFFTQFFQFRAQYDDLPTFT). A helical transmembrane segment spans residues 91–111 (FFVVGMAIVTGYLILSVPFSI). The Cytoplasmic portion of the chain corresponds to 112 to 130 (VCIARPVAIGPRFLLIVGD). The helical transmembrane segment at 131-151 (TLKAVLATSAAGSSAAIVYLA) threads the bilayer. The Extracellular portion of the chain corresponds to 152–173 (HNGNSDANWLDICQQFNDFCQR). The chain crosses the membrane as a helical span at residues 174–194 (VSGAVVAAFVAVVLLIFLIVL). The Cytoplasmic segment spans residues 195–202 (SAMALRKN).

This sequence belongs to the Casparian strip membrane proteins (CASP) family. As to quaternary structure, homodimer and heterodimers.

The protein localises to the cell membrane. Regulates membrane-cell wall junctions and localized cell wall deposition. Required for establishment of the Casparian strip membrane domain (CSD) and the subsequent formation of Casparian strips, a cell wall modification of the root endodermis that determines an apoplastic barrier between the intraorganismal apoplasm and the extraorganismal apoplasm and prevents lateral diffusion. This Striga hermonthica (Purple witchweed) protein is Casparian strip membrane protein 1.